We begin with the raw amino-acid sequence, 662 residues long: 72 kDa type IV collagenase (662 aa).

The signal sequence occupies residues 1 to 29; the sequence is MEARLVWGVLVGPLRVLCVLCCLLGHAIA. Positions 30 to 109 are cleaved as a propeptide — activation peptide; that stretch reads APSPIIKFPG…PRCGNPDVAN (80 aa). The Cysteine switch motif lies at 100–107; sequence PRCGNPDV. Cys102 contributes to the Zn(2+) binding site. The collagenase-like 1 stretch occupies residues 110 to 221; it reads YNFFPRKPKW…LWTLGEGQVV (112 aa). Ca(2+) is bound by residues Asp134 and Asp168. His178 and Asp180 together coordinate Zn(2+). Asp185 and Gly186 together coordinate Ca(2+). His193 is a binding site for Zn(2+). Ca(2+)-binding residues include Gly200, Gly202, and Asp204. His206 contributes to the Zn(2+) binding site. Residues Asp208, Asp209, and Glu211 each coordinate Ca(2+). The collagen-binding stretch occupies residues 222–396; sequence RVKYGNADGE…WGFCPDQGYS (175 aa). Fibronectin type-II domains lie at 228-276, 286-334, and 344-392; these read ADGE…FCPH, GDGQ…FCPE, and SEGA…FCPD. 6 cysteine pairs are disulfide-bonded: Cys233–Cys259, Cys247–Cys274, Cys291–Cys317, Cys305–Cys332, Cys349–Cys375, and Cys363–Cys390. The tract at residues 397–467 is collagenase-like 2; that stretch reads LFLVAAHEFG…GPTPTLGPVT (71 aa). Zn(2+) is bound at residue His403. The active site involves Glu404. Zn(2+) contacts are provided by His407 and His413. The segment at 414–662 is required for inhibitor TIMP2 binding; it reads SQDPGALMAP…GSIKSDWLGC (249 aa). Cysteines 471 and 662 form a disulfide. Hemopexin repeat units follow at residues 474–518, 519–565, 567–615, and 616–662; these read DIVF…WPEL, PEKI…GLPP, VQQV…WNAI, and PDNL…WLGC. Ca(2+) contacts are provided by Asp478, Asp523, and Asp571. Asn575 carries N-linked (GlcNAc...) asparagine glycosylation. Asp620 is a Ca(2+) binding site. The N-linked (GlcNAc...) asparagine glycan is linked to Asn644.

It belongs to the peptidase M10A family. Interacts (via the C-terminal hemopexin-like domains-containing region) with the integrin alpha-V/beta-3; the interaction promotes vascular invasion in angiogenic vessels and melamoma cells. Interacts (via the C-terminal PEX domain) with TIMP2 (via the C-terminal); the interaction inhibits the degradation activity. Interacts with GSK3B. The cofactor is Ca(2+). Requires Zn(2+) as cofactor. Post-translationally, phosphorylation on multiple sites modulates enzymatic activity. Phosphorylated by PKC in vitro. In terms of processing, the propeptide is processed by MMP14 (MT-MMP1) and MMP16 (MT-MMP3). Autocatalytic cleavage in the C-terminal produces the anti-angiogenic peptide, PEX. This processing appears to be facilitated by binding integrin integrinv/beta3.

It is found in the secreted. The protein localises to the extracellular space. The protein resides in the extracellular matrix. It localises to the membrane. Its subcellular location is the nucleus. The catalysed reaction is Cleavage of gelatin type I and collagen types IV, V, VII, X. Cleaves the collagen-like sequence Pro-Gln-Gly-|-Ile-Ala-Gly-Gln.. Functionally, ubiquitinous metalloproteinase that is involved in diverse functions such as remodeling of the vasculature, angiogenesis, tissue repair, tumor invasion, inflammation, and atherosclerotic plaque rupture. As well as degrading extracellular matrix proteins, can also act on several nonmatrix proteins such as big endothelial 1 and beta-type CGRP promoting vasoconstriction. Also cleaves KISS at a Gly-|-Leu bond. Appears to have a role in myocardial cell death pathways. Contributes to myocardial oxidative stress by regulating the activity of GSK3beta. Cleaves GSK3beta in vitro. Involved in the formation of the fibrovascular tissues. Its function is as follows. PEX, the C-terminal non-catalytic fragment of MMP2, possesses anti-angiogenic and anti-tumor properties and inhibits cell migration and cell adhesion to FGF2 and vitronectin. Ligand for integrin alpha-v/beta3 on the surface of blood vessels. This chain is 72 kDa type IV collagenase (Mmp2), found in Rattus norvegicus (Rat).